The sequence spans 237 residues: MSYACPILSTINICLPYLKDINMIDKRGETLLHKAVRYNKQSLVSLLLESGSDVNIRSNNGYTCIAIAINESRNIELLKMLLCHKPTLDCVIDSLREISNIVDNYYAIKQCIKYAMIIDDCTSSKIPESISQRYNDYIDLCNQELNEMKKIMVGGNTMFSLIFTDHGAKIIHRYANNPELREYYELKQNKIYVEAYDIISDAIVKHDRIHKTIESVDDNTYISNLPYTIKYKIFEQQ.

2 ANK repeats span residues 27-56 and 60-90; these read RGETLLHKAVRYNKQSLVSLLLESGSDVNI and NGYTCIAIAINESRNIELLKMLLCHKPTLDC.

In terms of biological role, may be involved in virus-host protein interaction through the ankyrin repeats. This chain is Ankyrin repeat protein 14, found in Vaccinia virus (strain Western Reserve) (VACV).